Reading from the N-terminus, the 394-residue chain is MLGNLKPQAPDKILALMGEFRADPRQGKIDLGVGVYKDATGHTPIMRAVHAAEQRMLETETTKTYAGLSGEPEFQKAMGELILGDGLKSETTATLATVGGTGALRQALELARMANPDLRVFVSDPTWPNHVSIMNFMGLPVQTYRYFDAETRGVDFEGMKADLAAAKKGDMVLLHGCCHNPTGANLTLDQWAEIASILEKTGALPLIDLAYQGFGDGLEEDAAGTRLIASRIPEVLIAASCSKNFGIYRERTGCLLALCADAATRELAQGAMAFLNRQTYSFPPFHGAKIVSTVLTTPELRADWMAELEAVRSGMLRLREQLAGELRDLSGSDRFGFVAEHRGMFSRLGATPEQVKRIKEEFGIYMVGDSRINIAGLNDNTIPILARAIIEVGV.

4 residues coordinate substrate: Gly34, Tyr65, Trp127, and Asn180. Position 243 is an N6-(pyridoxal phosphate)lysine (Lys243). Arg371 lines the substrate pocket.

It belongs to the class-I pyridoxal-phosphate-dependent aminotransferase family. In terms of assembly, homodimer. Pyridoxal 5'-phosphate serves as cofactor.

The protein resides in the cytoplasm. The enzyme catalyses an aromatic L-alpha-amino acid + 2-oxoglutarate = an aromatic oxo-acid + L-glutamate. Functionally, shows activities toward both dicarboxylic and aromatic substrates. The polypeptide is Aromatic-amino-acid aminotransferase (tyrB) (Paracoccus denitrificans).